We begin with the raw amino-acid sequence, 201 residues long: Potassium-transporting ATPase KdpC subunit (201 aa).

A helical transmembrane segment spans residues P7–M27.

The protein belongs to the KdpC family. As to quaternary structure, the system is composed of three essential subunits: KdpA, KdpB and KdpC.

The protein localises to the cell inner membrane. In terms of biological role, part of the high-affinity ATP-driven potassium transport (or Kdp) system, which catalyzes the hydrolysis of ATP coupled with the electrogenic transport of potassium into the cytoplasm. This subunit acts as a catalytic chaperone that increases the ATP-binding affinity of the ATP-hydrolyzing subunit KdpB by the formation of a transient KdpB/KdpC/ATP ternary complex. This is Potassium-transporting ATPase KdpC subunit from Bradyrhizobium diazoefficiens (strain JCM 10833 / BCRC 13528 / IAM 13628 / NBRC 14792 / USDA 110).